A 614-amino-acid chain; its full sequence is Threonine--tRNA ligase (614 aa).

Residues 1–141 (MRLLLIHSDY…LSKTIVPGEE (141 aa)) form an editing domain region. The tract at residues 198–490 (AHVDLMRSKE…ISTQKVPALP (293 aa)) is catalytic. Residues C290, H342, and H463 each coordinate Zn(2+).

It belongs to the class-II aminoacyl-tRNA synthetase family. As to quaternary structure, homodimer. It depends on Zn(2+) as a cofactor.

Its subcellular location is the cytoplasm. The catalysed reaction is tRNA(Thr) + L-threonine + ATP = L-threonyl-tRNA(Thr) + AMP + diphosphate + H(+). Catalyzes the attachment of threonine to tRNA(Thr) in a two-step reaction: L-threonine is first activated by ATP to form Thr-AMP and then transferred to the acceptor end of tRNA(Thr). Also edits incorrectly charged L-seryl-tRNA(Thr). In Methanoregula boonei (strain DSM 21154 / JCM 14090 / 6A8), this protein is Threonine--tRNA ligase.